The chain runs to 201 residues: Small ribosomal subunit protein uS4 (201 aa).

Positions 1–42 (MARYTGPVTRKSRRLGTDLVGGDQSFEKRPYPPGQHGRARIK) are disordered. Residues 91–157 (SRLDNVVYRA…VPFQIARETA (67 aa)) form the S4 RNA-binding domain.

It belongs to the universal ribosomal protein uS4 family. Part of the 30S ribosomal subunit. Contacts protein S5. The interaction surface between S4 and S5 is involved in control of translational fidelity.

One of the primary rRNA binding proteins, it binds directly to 16S rRNA where it nucleates assembly of the body of the 30S subunit. Its function is as follows. With S5 and S12 plays an important role in translational accuracy. This Mycobacterium ulcerans (strain Agy99) protein is Small ribosomal subunit protein uS4.